Here is a 216-residue protein sequence, read N- to C-terminus: Deoxyribose-phosphate aldolase (216 aa).

Catalysis depends on Asp89, which acts as the Proton donor/acceptor. The active-site Schiff-base intermediate with acetaldehyde is the Lys152. Lys181 functions as the Proton donor/acceptor in the catalytic mechanism.

It belongs to the DeoC/FbaB aldolase family. DeoC type 1 subfamily.

The protein resides in the cytoplasm. It carries out the reaction 2-deoxy-D-ribose 5-phosphate = D-glyceraldehyde 3-phosphate + acetaldehyde. It functions in the pathway carbohydrate degradation; 2-deoxy-D-ribose 1-phosphate degradation; D-glyceraldehyde 3-phosphate and acetaldehyde from 2-deoxy-alpha-D-ribose 1-phosphate: step 2/2. Functionally, catalyzes a reversible aldol reaction between acetaldehyde and D-glyceraldehyde 3-phosphate to generate 2-deoxy-D-ribose 5-phosphate. The chain is Deoxyribose-phosphate aldolase from Clostridium tetani (strain Massachusetts / E88).